Consider the following 393-residue polypeptide: Na(+)/H(+) antiporter NhaA (393 aa).

Helical transmembrane passes span 14-34, 60-80, 96-116, 125-145, 155-175, 179-199, 218-238, 263-283, 292-312, 330-350, and 362-382; these read AAGM…NWSV, LLLW…GLEV, MLPL…FLLF, AGWA…LTLL, VFLL…IALF, QVFW…AYMN, VCIL…GFFI, FLIV…GIVL, LGIA…FSWL, IVAV…ITLL, and YAKL…YLAL.

This sequence belongs to the NhaA Na(+)/H(+) (TC 2.A.33) antiporter family.

Its subcellular location is the cell inner membrane. It carries out the reaction Na(+)(in) + 2 H(+)(out) = Na(+)(out) + 2 H(+)(in). In terms of biological role, na(+)/H(+) antiporter that extrudes sodium in exchange for external protons. This Pectobacterium atrosepticum (strain SCRI 1043 / ATCC BAA-672) (Erwinia carotovora subsp. atroseptica) protein is Na(+)/H(+) antiporter NhaA.